The following is a 747-amino-acid chain: Probable type III restriction-modification enzyme HindVI Mod subunit (747 aa).

A binding of S-adenosyl methionine region spans residues 267–270; the sequence is DPPY.

The protein belongs to the N(4)/N(6)-methyltransferase family. As to quaternary structure, homodimer, also forms a functional restriction-competent complex with Res.

The enzyme catalyses a 2'-deoxyadenosine in DNA + S-adenosyl-L-methionine = an N(6)-methyl-2'-deoxyadenosine in DNA + S-adenosyl-L-homocysteine + H(+). A beta subtype methylase that binds the system-specific DNA recognition site 5'-CGAAT-3' and methylates A-4 (of only 1 strand). DNA restriction requires both the Res and Mod subunits. This Haemophilus influenzae (strain ATCC 51907 / DSM 11121 / KW20 / Rd) protein is Probable type III restriction-modification enzyme HindVI Mod subunit.